A 375-amino-acid polypeptide reads, in one-letter code: 23S rRNA (uracil(747)-C(5))-methyltransferase RlmC (375 aa).

Residues Cys-3, Cys-11, Cys-14, and Cys-87 each coordinate [4Fe-4S] cluster. 4 residues coordinate S-adenosyl-L-methionine: Gln-212, Phe-241, Glu-262, and Asn-307. The active-site Nucleophile is the Cys-334.

The protein belongs to the class I-like SAM-binding methyltransferase superfamily. RNA M5U methyltransferase family. RlmC subfamily.

The enzyme catalyses uridine(747) in 23S rRNA + S-adenosyl-L-methionine = 5-methyluridine(747) in 23S rRNA + S-adenosyl-L-homocysteine + H(+). Its function is as follows. Catalyzes the formation of 5-methyl-uridine at position 747 (m5U747) in 23S rRNA. The sequence is that of 23S rRNA (uracil(747)-C(5))-methyltransferase RlmC from Vibrio cholerae serotype O1 (strain ATCC 39541 / Classical Ogawa 395 / O395).